Here is a 419-residue protein sequence, read N- to C-terminus: Mitochondrial chaperone BCS1 (419 aa).

The Mitochondrial intermembrane segment spans residues 2–15 (PLSDFILALKDNPY). The chain crosses the membrane as a helical span at residues 16-32 (FGAGFGLVGVGTALALA). The Mitochondrial matrix portion of the chain corresponds to 33–419 (RKGVQLGLVA…AIHNAESLRR (387 aa)). Residue tyrosine 181 is modified to Phosphotyrosine. 230–237 (GPPGCGKS) serves as a coordination point for ATP.

It belongs to the AAA ATPase family. BCS1 subfamily. In terms of assembly, interacts with LETM1. As to expression, ubiquitous.

Its subcellular location is the mitochondrion inner membrane. It carries out the reaction ATP + H2O = ADP + phosphate + H(+). Functionally, chaperone necessary for the incorporation of Rieske iron-sulfur protein UQCRFS1 into the mitochondrial respiratory chain complex III. Plays an important role in the maintenance of mitochondrial tubular networks, respiratory chain assembly and formation of the LETM1 complex. The chain is Mitochondrial chaperone BCS1 (BCS1L) from Homo sapiens (Human).